The primary structure comprises 374 residues: NAD-capped RNA hydrolase ndx-9 (374 aa).

Cysteine 181, cysteine 184, cysteine 199, and cysteine 202 together coordinate Zn(2+). Substrate contacts are provided by residues tyrosine 207, 243–245 (AGF), glutamate 259, glutamate 263, and glutamate 307. A Nudix hydrolase domain is found at 208-336 (PTFSPVSITL…LADPLLKNLP (129 aa)). Residues alanine 243, glutamate 259, glutamate 263, and glutamate 307 each contribute to the Mg(2+) site. A Nudix box motif is present at residues 244-265 (GFAHSGESMAECARREIAEEVG). The short motif at 367–369 (LEN) is the Microbody targeting signal element.

This sequence belongs to the Nudix hydrolase family. NudC subfamily. As to quaternary structure, homodimer. The cofactor is Mg(2+). Requires Mn(2+) as cofactor. Zn(2+) is required as a cofactor.

The catalysed reaction is a 5'-end NAD(+)-phospho-ribonucleoside in mRNA + H2O = a 5'-end phospho-adenosine-phospho-ribonucleoside in mRNA + beta-nicotinamide D-ribonucleotide + 2 H(+). The enzyme catalyses NAD(+) + H2O = beta-nicotinamide D-ribonucleotide + AMP + 2 H(+). It catalyses the reaction NADH + H2O = reduced beta-nicotinamide D-ribonucleotide + AMP + 2 H(+). Its function is as follows. mRNA decapping enzyme that specifically removes the nicotinamide adenine dinucleotide (NAD) cap from a subset of mRNAs by hydrolyzing the diphosphate linkage to produce nicotinamide mononucleotide (NMN) and 5' monophosphate mRNA. The NAD-cap is present at the 5'-end of some RNAs; in contrast to the canonical N7 methylguanosine (m7G) cap, the NAD cap promotes mRNA decay. Mediates the hydrolysis of some nucleoside diphosphate derivatives. The chain is NAD-capped RNA hydrolase ndx-9 (ndx-9) from Caenorhabditis elegans.